Here is a 141-residue protein sequence, read N- to C-terminus: VLSPADKTNIKAAWDKVGAHAGDYGAEALERMFLSFPTTKTYFPHFDLSHGSAQVKGHGKKVGDALGNAVAHMDDLPGALSALSDLHAYKLRVDPVNFKLLSHCLLVTLACHLPGEFTPAIHASLDKFLASVSTVLVSKYR.

The 141-residue stretch at 1-141 folds into the Globin domain; the sequence is VLSPADKTNI…VSTVLVSKYR (141 aa). S3 bears the Phosphoserine mark. K7 carries the post-translational modification N6-succinyllysine. T8 carries the phosphothreonine modification. K11 carries the N6-succinyllysine modification. N6-acetyllysine; alternate is present on K16. K16 bears the N6-succinyllysine; alternate mark. A Phosphotyrosine modification is found at Y24. Phosphoserine is present on S35. Residue K40 is modified to N6-succinyllysine. S49 is subject to Phosphoserine. Residue H58 participates in O2 binding. Position 87 (H87) interacts with heme b. The residue at position 102 (S102) is a Phosphoserine. T108 carries the post-translational modification Phosphothreonine. A phosphoserine mark is found at S124 and S131. Phosphothreonine is present on T134. S138 is subject to Phosphoserine.

It belongs to the globin family. In terms of assembly, heterotetramer of two alpha chains and two beta chains. Red blood cells.

In terms of biological role, involved in oxygen transport from the lung to the various peripheral tissues. Hemopressin acts as an antagonist peptide of the cannabinoid receptor CNR1. Hemopressin-binding efficiently blocks cannabinoid receptor CNR1 and subsequent signaling. The chain is Hemoglobin subunit alpha (HBA) from Myotis velifer (Mouse-eared bat).